The following is a 122-amino-acid chain: Large ribosomal subunit protein bL12 (122 aa).

This sequence belongs to the bacterial ribosomal protein bL12 family. Homodimer. Part of the ribosomal stalk of the 50S ribosomal subunit. Forms a multimeric L10(L12)X complex, where L10 forms an elongated spine to which 2 to 4 L12 dimers bind in a sequential fashion. Binds GTP-bound translation factors.

Functionally, forms part of the ribosomal stalk which helps the ribosome interact with GTP-bound translation factors. Is thus essential for accurate translation. The sequence is that of Large ribosomal subunit protein bL12 from Stutzerimonas stutzeri (strain A1501) (Pseudomonas stutzeri).